The sequence spans 381 residues: 1-deoxy-D-xylulose 5-phosphate reductoisomerase (381 aa).

NADPH contacts are provided by Thr10, Gly11, Ser12, Ile13, and Asn120. Lys121 serves as a coordination point for 1-deoxy-D-xylulose 5-phosphate. Position 122 (Glu122) interacts with NADPH. Asp146 is a Mn(2+) binding site. The 1-deoxy-D-xylulose 5-phosphate site is built by Ser147, Glu148, Ser172, and His195. Position 148 (Glu148) interacts with Mn(2+). Gly201 contacts NADPH. 1-deoxy-D-xylulose 5-phosphate-binding residues include Ser208, Asn213, Lys214, and Glu217. A Mn(2+)-binding site is contributed by Glu217.

The protein belongs to the DXR family. The cofactor is Mg(2+). Mn(2+) serves as cofactor.

It catalyses the reaction 2-C-methyl-D-erythritol 4-phosphate + NADP(+) = 1-deoxy-D-xylulose 5-phosphate + NADPH + H(+). The protein operates within isoprenoid biosynthesis; isopentenyl diphosphate biosynthesis via DXP pathway; isopentenyl diphosphate from 1-deoxy-D-xylulose 5-phosphate: step 1/6. Its function is as follows. Catalyzes the NADPH-dependent rearrangement and reduction of 1-deoxy-D-xylulose-5-phosphate (DXP) to 2-C-methyl-D-erythritol 4-phosphate (MEP). In Thermodesulfovibrio yellowstonii (strain ATCC 51303 / DSM 11347 / YP87), this protein is 1-deoxy-D-xylulose 5-phosphate reductoisomerase.